A 124-amino-acid chain; its full sequence is PEP-dependent dihydroxyacetone kinase 1, phosphoryl donor subunit DhaM (124 aa).

One can recognise a PTS EIIA type-4 domain in the interval 4–124; it reads PYGVVIISHS…AANLKTIEIK (121 aa). His12 functions as the Tele-phosphohistidine intermediate in the catalytic mechanism.

Belongs to the PEP-utilizing enzyme family. Homodimer. The dihydroxyacetone kinase complex is composed of a homodimer of DhaM, a homodimer of DhaK and the subunit DhaL.

The protein resides in the cytoplasm. It catalyses the reaction dihydroxyacetone + phosphoenolpyruvate = dihydroxyacetone phosphate + pyruvate. Functionally, component of the dihydroxyacetone kinase complex, which is responsible for the phosphoenolpyruvate (PEP)-dependent phosphorylation of dihydroxyacetone. DhaM serves as the phosphoryl donor. Is phosphorylated by phosphoenolpyruvate in an EI- and HPr-dependent reaction, and a phosphorelay system on histidine residues finally leads to phosphoryl transfer to DhaL and dihydroxyacetone. The sequence is that of PEP-dependent dihydroxyacetone kinase 1, phosphoryl donor subunit DhaM from Listeria innocua serovar 6a (strain ATCC BAA-680 / CLIP 11262).